Reading from the N-terminus, the 434-residue chain is MLTRKTFHAFRSISGPPKKSVELPKYDLVIVGGGIVGCATARQLLIEKPNLKIALVEKEKELAVHQSGHNSGVIHAGIYYTPGSLKAKLCVEGLDLSYEFFDKEKIPYKKTGKLIVAVEQEEVPRLDALFARAQTNGCRDIEMIDSKRITDIEPHCKGLKALWSPHTGIVDWGYVTKKFGEDFEKRGGKIYTSYPLEKIEDNLKDSNYPIRVSSDPSYADFETKNLITCAGLQSDRVAALSGCSTDPKIVPFRGEYLLLKPEKRHLVKTNIYPVPDPRFPFLGVHFTPRMNGDIWLGPNAVLAYKREGYSYFSISPSDLLESLSYSGMQKLVKKHFTFGIKELYRGIWIAAQVKQLQRFIPELKYSDVTRGPSGVRAQAMDSAGNLVDDFVFDSGTGKLSSLIMHVRNAPSPAATSSLAIAKMITSEAITRFKL.

This sequence belongs to the L2HGDH family. FAD is required as a cofactor.

It localises to the mitochondrion. It catalyses the reaction (S)-2-hydroxyglutarate + A = 2-oxoglutarate + AH2. This chain is L-2-hydroxyglutarate dehydrogenase, mitochondrial, found in Caenorhabditis briggsae.